The primary structure comprises 445 residues: StAR-related lipid transfer protein 3 (445 aa).

Over 1–51 (MSKLPGELARDLECSLPAVASLGSSLSHSQSLSSHLLPPPEKRRAISDVRR) the chain is Cytoplasmic. Residues 46 to 217 (ISDVRRTFCL…YSPPESFAGS (172 aa)) form the MENTAL domain. A helical transmembrane segment spans residues 52–72 (TFCLFVTFDLLFISLLWIIEL). At 73–94 (NTNTGIRKNLEQEIIQYNFKTS) the chain is on the extracellular side. The chain crosses the membrane as a helical span at residues 95–115 (FFDIFVLAFFRFSGLLLGYAV). Topologically, residues 116–120 (LRLQH) are cytoplasmic. A helical membrane pass occupies residues 121 to 141 (WWVIAVTTLVSSAFLIVKVIL). At 142-148 (SELLSKG) the chain is on the extracellular side. The chain crosses the membrane as a helical span at residues 149 to 169 (AFGYLLPIVSFVLAWLETWFL). Residues 170–445 (DFKVLPQEAE…QRISELGARA (276 aa)) lie on the Cytoplasmic side of the membrane. Short sequence motifs (FFAT) lie at residues 206–212 (QFYSPPE) and 207–212 (FYSPPE). Phosphoserine is present on residues serine 209, serine 217, and serine 221. Positions 248–443 (VVDQILAQEE…LRQRISELGA (196 aa)) constitute an START domain.

The protein belongs to the STARD3 family. As to quaternary structure, homodimer. Interacts (via the MENTAL domain) with STARD3NL. Interacts (via phosphorylated FFAT motif) with VAPA (via MSP domain). Interacts (via phosphorylated FFAT motif) with VAPB (via MSP domain). Interacts (via phosphorylated FFAT motif) with MOSPD2 (via MSP domain); this interaction allows enrichment of MOSPD2 around endosomes. Phosphorylation at Ser-209 is necessary and sufficient for the direct interaction of the phosphorylated FFAT motif with the MSP domain of MOSPD2, VAPA and VAPB and allows the tethering of two membranes that participates in the formation of ER-endosome contacts. Phosphorylation of the FFAT motif leads to conformation changes. Additional phosphorylations around the core FFAT motif (QFYSPPE) are not essential but strengthen the interaction with MOSPD2, VAPA and VAPB. Phosphorylation at Ser-209 of FFAT motif drives membrane tethering between the endoplasmic reticulum and late endosomes via interaction with VAPA and VAPB that in turn allows the efficient transport of sterol mediated by the START domain. As to expression, present in retina. Localizes to all neurons of macular retina and especially cone inner segments and axons (at protein level).

The protein resides in the late endosome membrane. It catalyses the reaction cholesterol(in) = cholesterol(out). In terms of biological role, sterol-binding protein that mediates cholesterol transport from the endoplasmic reticulum to endosomes. The sterol transport mechanism is triggered by phosphorylation of FFAT motif that leads to membrane tethering between the endoplasmic reticulum and late endosomes via interaction with VAPA and VAPB. Acts as a lipid transfer protein that redirects sterol to the endosome at the expense of the cell membrane and favors membrane formation inside endosomes. May also mediate cholesterol transport between other membranes, such as mitochondria membrane or cell membrane. However, such results need additional experimental evidences; probably mainly mediates cholesterol transport from the endoplasmic reticulum to endosomes. Does not activate transcriptional cholesterol sensing. Able to bind other lipids, such as lutein, a xanthophyll carotenoids that form the macular pigment of the retina. Able to bind other lipids, such as lutein, a xanthophyll carotenoids that form the macular pigment of the retina. This Macaca mulatta (Rhesus macaque) protein is StAR-related lipid transfer protein 3.